The sequence spans 820 residues: Leucine--tRNA ligase (820 aa).

Positions 40–51 (PYPSGAGLHVGH) match the 'HIGH' region motif. The short motif at 601–605 (KMSKS) is the 'KMSKS' region element. Lys-604 contributes to the ATP binding site.

The protein belongs to the class-I aminoacyl-tRNA synthetase family.

It is found in the cytoplasm. It catalyses the reaction tRNA(Leu) + L-leucine + ATP = L-leucyl-tRNA(Leu) + AMP + diphosphate. The sequence is that of Leucine--tRNA ligase from Chlamydia pneumoniae (Chlamydophila pneumoniae).